The chain runs to 200 residues: 3-isopropylmalate dehydratase small subunit (200 aa).

Belongs to the LeuD family. LeuD type 1 subfamily. As to quaternary structure, heterodimer of LeuC and LeuD.

The enzyme catalyses (2R,3S)-3-isopropylmalate = (2S)-2-isopropylmalate. It functions in the pathway amino-acid biosynthesis; L-leucine biosynthesis; L-leucine from 3-methyl-2-oxobutanoate: step 2/4. Catalyzes the isomerization between 2-isopropylmalate and 3-isopropylmalate, via the formation of 2-isopropylmaleate. In Actinobacillus succinogenes (strain ATCC 55618 / DSM 22257 / CCUG 43843 / 130Z), this protein is 3-isopropylmalate dehydratase small subunit.